We begin with the raw amino-acid sequence, 395 residues long: Inactive serine protease 54 (395 aa).

An N-terminal signal peptide occupies residues 1-30 (MVSAAGLSGDGKMRGVLLVLLGLLYSSTSC). One can recognise a Peptidase S1 domain in the interval 37 to 269 (VFYGPDPKEG…YSKWITSKAE (233 aa)). N-linked (GlcNAc...) asparagine glycosylation occurs at asparagine 123. Cystine bridges form between cysteine 164/cysteine 227, cysteine 195/cysteine 205, and cysteine 217/cysteine 248. The segment at 324–348 (RLGNSSRDSLDVREKDVKESGRSPE) is disordered. An N-linked (GlcNAc...) asparagine glycan is attached at asparagine 327. Residues 331-345 (DSLDVREKDVKESGR) are compositionally biased toward basic and acidic residues.

It belongs to the peptidase S1 family. Plasma kallikrein subfamily.

The protein localises to the secreted. This Homo sapiens (Human) protein is Inactive serine protease 54 (PRSS54).